We begin with the raw amino-acid sequence, 550 residues long: MTPADLAELLRNTAAAVLAERGLDAAALPATVVVERPRNPEHGDYASNLALQLGKKVGANPRELAGWLAAALAETDGIASAEVAGPGFINLRLEASAQAVVVTNVLDAGDRYGHSDAQSTHNINLEFVSANPTGPIHIGGTRWAAVGDALGRLLSTQGAGVVREYYFNDHGAQIDRFASSLIAAAKGEPTPEDGYAGSYINDIAAQVLRQAPDALSLPEPQLRETFRAIGVDLMFTHIKESLHEFGTDFDVYTHEDSMHTSGRVDQAIARLRETGNIYEKDGATWLRTSAFGDDKDRVVIKSDGKPAYIAGDIAYYLDKRQRGFDLCIYMLGADHHGYIARLKAVAAAFGDDPATVEVLIGQMVNLVRDGQPVRMSKRAGTVITLDDLVEAIGVDAARYSLIRSSVDTPIDIDLALWSSASNENPVYYVQYAHARLSALARNAAELGLIPDTAHLELLSHDKEGTLLRTLGEFPRVLKTAASLREPHRVCRYLEDLAGDYHRFYDSCRVLPQGDEQPTDLHTARLALCQATRQVIANGLAILGVTAPERM.

A 'HIGH' region motif is present at residues 130–140 (ANPTGPIHIGG).

The protein belongs to the class-I aminoacyl-tRNA synthetase family. In terms of assembly, monomer.

The protein resides in the cytoplasm. It carries out the reaction tRNA(Arg) + L-arginine + ATP = L-arginyl-tRNA(Arg) + AMP + diphosphate. The protein is Arginine--tRNA ligase of Mycolicibacterium paratuberculosis (strain ATCC BAA-968 / K-10) (Mycobacterium paratuberculosis).